The chain runs to 272 residues: 2-amino-3,7-dideoxy-D-threo-hept-6-ulosonate synthase (272 aa).

D33 acts as the Proton acceptor in catalysis. 1-deoxy-D-threo-hexo-2,5-diulose 6-phosphate-binding positions include 33–37 and 153–155; these read DHGVS and YPR. Y153 acts as the Proton donor in catalysis. The active-site Schiff-base intermediate with substrate is the K184. Residues 209 to 210 and 237 to 238 each bind 1-deoxy-D-threo-hexo-2,5-diulose 6-phosphate; these read GG and GR.

The protein belongs to the DeoC/FbaB aldolase family. ADHS subfamily. Homodecamer.

The catalysed reaction is 1-deoxy-D-threo-hexo-2,5-diulose 6-phosphate + L-aspartate 4-semialdehyde = 2,3-dioxopropyl phosphate + 2-amino-2,3,7-trideoxy-D-lyxo-hept-6-ulosonate. In terms of biological role, catalyzes a transaldol reaction between 6-deoxy-5-ketofructose 1-phosphate (DKFP) and L-aspartate semialdehyde (ASA) with an elimination of hydroxypyruvaldehyde phosphate to yield 2-amino-3,7-dideoxy-D-threo-hept-6-ulosonate (ADH). Plays a key role in an alternative pathway of the biosynthesis of 3-dehydroquinate (DHQ), which is involved in the canonical pathway for the biosynthesis of aromatic amino acids. This Methanococcus maripaludis (strain C7 / ATCC BAA-1331) protein is 2-amino-3,7-dideoxy-D-threo-hept-6-ulosonate synthase.